Reading from the N-terminus, the 460-residue chain is ATP synthase subunit beta (460 aa).

An ATP-binding site is contributed by 150 to 157 (GGAGVGKT).

This sequence belongs to the ATPase alpha/beta chains family. F-type ATPases have 2 components, CF(1) - the catalytic core - and CF(0) - the membrane proton channel. CF(1) has five subunits: alpha(3), beta(3), gamma(1), delta(1), epsilon(1). CF(0) has three main subunits: a(1), b(2) and c(9-12). The alpha and beta chains form an alternating ring which encloses part of the gamma chain. CF(1) is attached to CF(0) by a central stalk formed by the gamma and epsilon chains, while a peripheral stalk is formed by the delta and b chains.

Its subcellular location is the cell inner membrane. The enzyme catalyses ATP + H2O + 4 H(+)(in) = ADP + phosphate + 5 H(+)(out). Produces ATP from ADP in the presence of a proton gradient across the membrane. The catalytic sites are hosted primarily by the beta subunits. This is ATP synthase subunit beta from Erwinia tasmaniensis (strain DSM 17950 / CFBP 7177 / CIP 109463 / NCPPB 4357 / Et1/99).